The primary structure comprises 150 residues: MKVIFLADVKGKGKKGEIKEVPTGYAQNFLIKKNLAKEATAQAVGELRGKQKSEEKAHAEMIAEGKAIKAQLEAEETVVEFVEKVGPDGRTFGSITNKKIAEELQKQFGIKIDKRHIQVQAPIRAVGLIDVPVKIYQDITSVINLRVKEG.

This sequence belongs to the bacterial ribosomal protein bL9 family.

Binds to the 23S rRNA. The protein is Large ribosomal subunit protein bL9 of Streptococcus pneumoniae (strain CGSP14).